The primary structure comprises 662 residues: Calcium-dependent protease (662 aa).

The Peptidase S8 domain maps to 196–529; the sequence is QWHLKQTTIG…YGRINALKAV (334 aa). Catalysis depends on charge relay system residues Asp233, His270, and Ser466. One can recognise a P/Homo B domain in the interval 535 to 662; sequence AQPEPVSIFT…IRSLTIELGF (128 aa).

Belongs to the peptidase S8 family.

The protein localises to the cytoplasm. Degrades phycobiliproteins in vitro. Has a substrate specificity similar to that of trypsin. This is Calcium-dependent protease (prcA) from Trichormus variabilis (strain ATCC 29413 / PCC 7937) (Anabaena variabilis).